The sequence spans 350 residues: MKKSTLALVVMGVVASASVHAAEVYNKNGNKLDVYGKVKAMHYISDDDTKDGDQTYVRFGFKGETQINDQLTGYGRWEAEFAGNKAESDSSQKTRLAFAGLKLKDFGSLDYGRNLGALYDVEAWTDMFPEFGGDSSAQTDNFMTKRASGLATYRNTDFFGAIDGLDMTLQYQGKNENRDAKKQNGDGFGTSLTYDFGGTDFAVSGAYTNSDRTNAQNLLARAQGQKAEAWATGLKYDANDIYLAAMYSETRNMTPISGGFANKAQNFEVVAQYQFDFGLRPSLGYVQSKGKDNEGIGDEDLVKYIDVGATYYFNKNMSAFVDYKINQIDDDNKLGVSSDDIVAVGMTYQF.

An N-terminal signal peptide occupies residues 1–21 (MKKSTLALVVMGVVASASVHA).

This sequence belongs to the Gram-negative porin family. As to quaternary structure, homotrimer.

The protein localises to the cell outer membrane. Uptake of inorganic phosphate, phosphorylated compounds, and some other negatively charged solutes. The polypeptide is Outer membrane porin PhoE (phoE) (Enterobacter cloacae).